The chain runs to 492 residues: N-succinylglutamate 5-semialdehyde dehydrogenase (492 aa).

220–225 is an NAD(+) binding site; the sequence is GSANTG. Active-site residues include glutamate 243 and cysteine 277.

It belongs to the aldehyde dehydrogenase family. AstD subfamily.

The catalysed reaction is N-succinyl-L-glutamate 5-semialdehyde + NAD(+) + H2O = N-succinyl-L-glutamate + NADH + 2 H(+). It functions in the pathway amino-acid degradation; L-arginine degradation via AST pathway; L-glutamate and succinate from L-arginine: step 4/5. In terms of biological role, catalyzes the NAD-dependent reduction of succinylglutamate semialdehyde into succinylglutamate. In Escherichia coli (strain K12 / MC4100 / BW2952), this protein is N-succinylglutamate 5-semialdehyde dehydrogenase.